We begin with the raw amino-acid sequence, 187 residues long: MSEDFMLDTDDIERRMDGAISSLKTEFASLRTGRASASMLEPVMVDAYGQRTPINQVGTVNVPEPRMVTINVWDKGLVGKVEKAIRESGLGINPQLNGTIIMLPIPELNEERRRELSKVAGQYAEHARVSIRNIRRDGMDQIKKAKADGLSEDDQKLWEGEVQEITDRYIKGIDDQLATKQAEIMQV.

It belongs to the RRF family.

It is found in the cytoplasm. In terms of biological role, responsible for the release of ribosomes from messenger RNA at the termination of protein biosynthesis. May increase the efficiency of translation by recycling ribosomes from one round of translation to another. This Roseobacter denitrificans (strain ATCC 33942 / OCh 114) (Erythrobacter sp. (strain OCh 114)) protein is Ribosome-recycling factor.